The sequence spans 567 residues: Proline--tRNA ligase (567 aa).

Belongs to the class-II aminoacyl-tRNA synthetase family. ProS type 1 subfamily. As to quaternary structure, homodimer.

It is found in the cytoplasm. It carries out the reaction tRNA(Pro) + L-proline + ATP = L-prolyl-tRNA(Pro) + AMP + diphosphate. In terms of biological role, catalyzes the attachment of proline to tRNA(Pro) in a two-step reaction: proline is first activated by ATP to form Pro-AMP and then transferred to the acceptor end of tRNA(Pro). As ProRS can inadvertently accommodate and process non-cognate amino acids such as alanine and cysteine, to avoid such errors it has two additional distinct editing activities against alanine. One activity is designated as 'pretransfer' editing and involves the tRNA(Pro)-independent hydrolysis of activated Ala-AMP. The other activity is designated 'posttransfer' editing and involves deacylation of mischarged Ala-tRNA(Pro). The misacylated Cys-tRNA(Pro) is not edited by ProRS. This Geobacillus thermodenitrificans (strain NG80-2) protein is Proline--tRNA ligase.